We begin with the raw amino-acid sequence, 443 residues long: Glycerol-3-phosphate acyltransferase 3-like (443 aa).

The next 3 membrane-spanning stretches (helical) occupy residues tryptophan 15 to isoleucine 35, isoleucine 146 to leucine 166, and isoleucine 170 to leucine 190. The HXXXXD motif motif lies at histidine 238–aspartate 243. Residues isoleucine 358 to leucine 378 form a helical membrane-spanning segment.

Belongs to the 1-acyl-sn-glycerol-3-phosphate acyltransferase family.

Its subcellular location is the endoplasmic reticulum membrane. It carries out the reaction sn-glycerol 3-phosphate + an acyl-CoA = a 1-acyl-sn-glycero-3-phosphate + CoA. The enzyme catalyses a 1-acyl-sn-glycero-3-phosphate + an acyl-CoA = a 1,2-diacyl-sn-glycero-3-phosphate + CoA. Its pathway is glycerolipid metabolism; triacylglycerol biosynthesis. It functions in the pathway phospholipid metabolism; CDP-diacylglycerol biosynthesis; CDP-diacylglycerol from sn-glycerol 3-phosphate: step 1/3. In terms of biological role, may transfer the acyl-group from acyl-coA to the sn-1 position of glycerol-3-phosphate, an essential step in glycerolipid biosynthesis. Also transfers the acyl-group from acyl-coA to the sn-2 position of 1-acyl-sn-glycerol-3-phosphate (lysophosphatidic acid, or LPA), forming 1,2-diacyl-sn-glycerol-3-phosphate (phosphatidic acid, or PA). This chain is Glycerol-3-phosphate acyltransferase 3-like (agpat9l), found in Danio rerio (Zebrafish).